Reading from the N-terminus, the 308-residue chain is Probable GTP 3',8-cyclase (308 aa).

In terms of domain architecture, Radical SAM core spans 4 to 224; that stretch reads RFGRPLEDLR…QIRKKHFRPR (221 aa). Arginine 13 lines the GTP pocket. 3 residues coordinate [4Fe-4S] cluster: cysteine 20, cysteine 24, and cysteine 27. Position 60 (lysine 60) interacts with GTP. Glycine 64 provides a ligand contact to S-adenosyl-L-methionine. Threonine 90 is a GTP binding site. Serine 114 lines the S-adenosyl-L-methionine pocket. Residue lysine 151 coordinates GTP. Positions 245 and 248 each coordinate [4Fe-4S] cluster. A GTP-binding site is contributed by 250 to 252; it reads RIR. A [4Fe-4S] cluster-binding site is contributed by cysteine 262.

Belongs to the radical SAM superfamily. MoaA family. [4Fe-4S] cluster is required as a cofactor.

The enzyme catalyses GTP + AH2 + S-adenosyl-L-methionine = (8S)-3',8-cyclo-7,8-dihydroguanosine 5'-triphosphate + 5'-deoxyadenosine + L-methionine + A + H(+). The protein operates within cofactor biosynthesis; molybdopterin biosynthesis. Functionally, catalyzes the cyclization of GTP to (8S)-3',8-cyclo-7,8-dihydroguanosine 5'-triphosphate. The sequence is that of Probable GTP 3',8-cyclase from Saccharolobus islandicus (strain L.S.2.15 / Lassen #1) (Sulfolobus islandicus).